A 409-amino-acid chain; its full sequence is MSKKKVVLAYSGGLDTSVAIKWLSDKGYDVIAVGLDVGEGKDLEFVKEKALKVGAIESYTIDAKKEFAEEFVLPALQAHALYEQKYPLVSALSRPLISKKLVEIAEQTGAQAVAHGCTGKGNDQVRFEVSIQALNPNLEVLAPVREWAWSRDEEIEYAKKNNIPIPIDLDNPYSVDQNLWGRSNECGILEDPWATPPEGAYELTVAIEDAPDQPEIVEIGFEKGIPVTLNGKSYPVHELILELNQIAGKHGVGRIDHVENRLVGIKSREVYECPGAMTLIKAHKELEDLTLTKEVAHFKPVVEKKIAELIYEGLWFSPLQPALSAFLKETQSTVTGVVRVKLFKGHAIVEGRKSEYSLYNEKLATYTPDDEFDHNAAVGFISLWGLPTKVYSMVNKEMKEKQEKKEVTS.

ATP is bound at residue 9 to 17; sequence AYSGGLDTS. Y86 is an L-citrulline binding site. G116 serves as a coordination point for ATP. Positions 118, 122, and 123 each coordinate L-aspartate. N122 provides a ligand contact to L-citrulline. L-citrulline contacts are provided by R126, S174, S183, E259, and Y271.

It belongs to the argininosuccinate synthase family. Type 1 subfamily. Homotetramer.

It is found in the cytoplasm. It carries out the reaction L-citrulline + L-aspartate + ATP = 2-(N(omega)-L-arginino)succinate + AMP + diphosphate + H(+). It participates in amino-acid biosynthesis; L-arginine biosynthesis; L-arginine from L-ornithine and carbamoyl phosphate: step 2/3. This is Argininosuccinate synthase from Halalkalibacterium halodurans (strain ATCC BAA-125 / DSM 18197 / FERM 7344 / JCM 9153 / C-125) (Bacillus halodurans).